The sequence spans 521 residues: Zinc finger and BTB domain-containing protein 18 (521 aa).

A BTB domain is found at 24-91 (CDCTVLVGDA…MYEGKLQFKD (68 aa)). Residues 190–230 (DSASIPQTGGEAETHTAAAGKTADSPCSSTGSLSHRSATSM) are disordered. Residues 197 to 212 (TGGEAETHTAAAGKTA) are compositionally biased toward low complexity. Residues 214–230 (SPCSSTGSLSHRSATSM) are compositionally biased toward polar residues. 4 consecutive C2H2-type zinc fingers follow at residues 369–391 (FMCPLCNKVFPSPHILQIHLSTH), 409–431 (PTCSLCGKTFSCMYTLKRHERTH), 437–459 (FTCTQCGKSFQYSHNLSRHAVVH), and 465–488 (HACKWCERRFTQSGDLYRHIRKFH).

Belongs to the krueppel C2H2-type zinc-finger protein family. ZBTB18 subfamily.

The protein localises to the nucleus. Functionally, transcriptional repressor that plays a role in various developmental processes. Specifically binds the consensus DNA sequence 5'-[AC]ACATCTG[GT][AC]-3' which contains the E box core, and acts by recruiting chromatin remodeling multiprotein complexes. In Xenopus tropicalis (Western clawed frog), this protein is Zinc finger and BTB domain-containing protein 18 (zbtb18).